The following is a 505-amino-acid chain: Lysine--tRNA ligase (505 aa).

Mg(2+) contacts are provided by E415 and E422.

The protein belongs to the class-II aminoacyl-tRNA synthetase family. As to quaternary structure, homodimer. The cofactor is Mg(2+).

The protein localises to the cytoplasm. It carries out the reaction tRNA(Lys) + L-lysine + ATP = L-lysyl-tRNA(Lys) + AMP + diphosphate. The polypeptide is Lysine--tRNA ligase (Salmonella paratyphi C (strain RKS4594)).